A 212-amino-acid polypeptide reads, in one-letter code: Peptide methionine sulfoxide reductase MsrA (212 aa).

Cys-52 is an active-site residue.

The protein belongs to the MsrA Met sulfoxide reductase family.

The catalysed reaction is L-methionyl-[protein] + [thioredoxin]-disulfide + H2O = L-methionyl-(S)-S-oxide-[protein] + [thioredoxin]-dithiol. It catalyses the reaction [thioredoxin]-disulfide + L-methionine + H2O = L-methionine (S)-S-oxide + [thioredoxin]-dithiol. Has an important function as a repair enzyme for proteins that have been inactivated by oxidation. Catalyzes the reversible oxidation-reduction of methionine sulfoxide in proteins to methionine. This chain is Peptide methionine sulfoxide reductase MsrA, found in Cronobacter sakazakii (strain ATCC BAA-894) (Enterobacter sakazakii).